The sequence spans 156 residues: Aspercryptin biosynthesis cluster protein B (156 aa).

The first 39 residues, 1 to 39 (MRMANRIGAGRKSALQLSHLRTRLTSSAAAVATAPTLDP), serve as a signal peptide directing secretion.

This sequence belongs to the YciI family.

It functions in the pathway secondary metabolite biosynthesis. Functionally, part of the gene cluster that mediates the biosynthesis of aspercryptins, linear lipopeptides built from six amino acids including 2 highly unusual and nonproteogenic amino acids, 2-amino-octanoic acid (2aoa) and 2-amino-dodecanol (2adol). The core structure of aspercryptins is as follows: Ser/Ala-Thr-Ile/Val-2aoa-Aasn-2adol. The first step of aspercryptin biosynthesis is the generation of the fatty acid precursors, octanoic and dodecanoic acids, by the FAS subunits atnF and atnM. The fatty acid precursors are likely transformed into the corresponding alpha-amino fatty acids in three steps. First, they are hydroxylated by the cytochrome P450 monooxygenase atnE, then oxidized to the corresponding alpha-keto acids by the NAD(P)-dependent oxidoreductase atnD, and finally converted to the alpha-amino fatty acids by the PLP-dependent aminotransferases atnH or atnJ. the alpha-amino fatty acids, 2-amino-octanoic and 2-amino-dodecanoic acids, are recognized, activated, and covalently tethered to the NRPS atnA by its fourth and sixth adenylation domains. The second module of atnA is the Thr module and contains an epimerase (E) domain responsible for the epimerization of Thr to D-allo-Thr. Additionally, despite atnA having only one epimerase domain, the first amino acid of aspercryptin A1 is D-Ser, suggesting that serine is either loaded directly as D-Ser on the first module or that the epimerase domain in the threonine module epimerizes both L-Ser and L-Thr. After condensation of the hexapeptide of aspercryptin, the C-terminal reductase (TE) domain might be involved in the reductive release and production of the aldehyde hexapeptide. Further reduction would generate aspercryptins. The variety of aspercryptins produced reflects the flexibility of the atnA NRPS, allowing incorporation of alanine instead of serine, valine for isoleucine, and a C10 fatty amino alcohol instead of the C12 version. AtnB seems to be involved in the selectivity for Ile versus Val by the third module. Moreover, type B, C and D aspercryptins have an additional N-terminal cichorine, acetyl and propionyl group respectively. This Emericella nidulans (strain FGSC A4 / ATCC 38163 / CBS 112.46 / NRRL 194 / M139) (Aspergillus nidulans) protein is Aspercryptin biosynthesis cluster protein B.